The primary structure comprises 405 residues: Type II secretion system protein F (405 aa).

The Cytoplasmic segment spans residues 1–168 (MAAFEYLALD…QRQQSRQKIQ (168 aa)). The Ca(2+) site is built by threonine 97, glutamate 151, and aspartate 155. Residues 169–189 (LALLYPVILMVASLAIVGFLL) traverse the membrane as a helical segment. At 190–219 (GYVVPDVVRVFIDSGQTLPLLTRVLIGVSD) the chain is on the periplasmic side. Residues 220-239 (WVKAWGALAFVAAIGGVIGF) form a helical membrane-spanning segment. At 240-376 (RYALRKDAFR…IGLMVGLFEP (137 aa)) the chain is on the cytoplasmic side. Residues 377–397 (FMLIFMGAVVLVIVLAILLPI) form a helical membrane-spanning segment. Topologically, residues 398 to 405 (LSLNQLVG) are periplasmic.

It belongs to the GSP F family. In terms of assembly, type II secretion system is composed of four main components: the outer membrane complex, the inner membrane complex, the cytoplasmic secretion ATPase and the periplasm-spanning pseudopilus. Homodimer. Interacts with XcpR/GspE and XcpY/GspL components.

Its subcellular location is the cell inner membrane. Component of the type II secretion system inner membrane complex required for the energy-dependent secretion of extracellular factors such as proteases and toxins from the periplasm. The protein is Type II secretion system protein F (xcpS) of Pseudomonas aeruginosa (strain ATCC 15692 / DSM 22644 / CIP 104116 / JCM 14847 / LMG 12228 / 1C / PRS 101 / PAO1).